We begin with the raw amino-acid sequence, 154 residues long: MIRIFIDADACPVRDETYRVAQRHGLQTFVVSNRMIAIPSSPLIERIVVTQGMDVADDWIAEQVNAHDIVISADIPLAARCVARGACVLDPRGRILDEDAIGMALAMRNLMEDLRATGAITQGGRGFTRADRSTFLSALDTAVVRGRKRAAQAR.

Belongs to the UPF0178 family.

This Gluconacetobacter diazotrophicus (strain ATCC 49037 / DSM 5601 / CCUG 37298 / CIP 103539 / LMG 7603 / PAl5) protein is UPF0178 protein GDI0551/Gdia_1457.